A 308-amino-acid chain; its full sequence is D-alanine--D-alanine ligase (308 aa).

An ATP-grasp domain is found at 102–302 (KHVAKAAGIP…FGEFLRWMVE (201 aa)). Residue 128–183 (PMKPPYVVKPVREGSSFGVVIVKEDQSHPPQVITSSDWRYGDRIMVERYVAGREFT) participates in ATP binding. Residues aspartate 252, glutamate 269, and asparagine 271 each contribute to the Mg(2+) site.

This sequence belongs to the D-alanine--D-alanine ligase family. It depends on Mg(2+) as a cofactor. Requires Mn(2+) as cofactor.

It is found in the cytoplasm. It carries out the reaction 2 D-alanine + ATP = D-alanyl-D-alanine + ADP + phosphate + H(+). It participates in cell wall biogenesis; peptidoglycan biosynthesis. In terms of biological role, cell wall formation. The chain is D-alanine--D-alanine ligase from Sinorhizobium medicae (strain WSM419) (Ensifer medicae).